We begin with the raw amino-acid sequence, 524 residues long: Cytochrome P450 4F3 (524 aa).

Residues Trp19–Tyr39 form a helical membrane-spanning segment. Heme is bound at residue Cys468.

This sequence belongs to the cytochrome P450 family. The cofactor is heme. In terms of tissue distribution, highest level in polymorphonuclear leukocytes and dendritic cells. Detectable in lymph nodes, spleen, bone marrow and peripheral blood. Highly expressed in ovary. Very low level in liver, kidney, and smooth muscle. Expressed in neutrophils (at protein level).

Its subcellular location is the endoplasmic reticulum membrane. The protein localises to the microsome membrane. The enzyme catalyses leukotriene B4 + reduced [NADPH--hemoprotein reductase] + O2 = 18-hydroxy-leukotriene B4 + oxidized [NADPH--hemoprotein reductase] + H2O + H(+). It carries out the reaction leukotriene B4 + reduced [NADPH--hemoprotein reductase] + O2 = 19-hydroxy-leukotriene B4 + oxidized [NADPH--hemoprotein reductase] + H2O + H(+). It participates in lipid metabolism; leukotriene B4 degradation. In terms of biological role, a cytochrome P450 monooxygenase involved in the metabolism of the pro-inflammatory lipid mediator leukotriene B4 (LTB4). Hydroxylates at the omega-1 and omega-2 positions LTB4. This oxidation step leads to LTB4 inactivation, which is postulated to be a crucial part of the resolution of inflammation. Mechanistically, uses molecular oxygen inserting one oxygen atom into a substrate, and reducing the second into a water molecule, with two electrons provided by NADPH via cytochrome P450 reductase (CPR; NADPH-ferrihemoprotein reductase). This chain is Cytochrome P450 4F3, found in Mus musculus (Mouse).